Here is a 608-residue protein sequence, read N- to C-terminus: MPKHSLEQIKEKITERSKKTRELYLENTFNPKNQPKIESLGCANIAHVTASMPEHLKMPLGSHKRKHFAIITAYNDMLSAHQPFKNYPDLIKKELQEHNAYASVASGVPAMCDGITQGYEGMELSLFSRDVIALSTAVGLSHNVFDGAFFLGVCDKIVPGLLIGALSFGNLASVFVPSGPMVSGIENYKKAKARQDFAMGKINREELLKVEMQSYHDVGTCTFYGTANSNQMMMEFMGLHVANSSFINPNNPLRKVLVEESAKRLASGKVLPLAKLIDEKSILNALIGLMATGGSTNHTLHLIAIARSCGVILNWDDFDAISNLIPLLAKVYPNGSADVNAFEACGGLAFVIKELLKEGLLFEDTHTIMDTETQKGMQNYTKTPFLENDQLVYKDAVSHSLNTDILRPVSEPFAANGGLKILKGNLGRAVIKISAIKDEHRKVKARAIVFKTQSEFLERFKNKELERDFVAVLPFQGPKSNGMPELHKLTTNLGALQDMGYKVALVTDGRMSGASGKVPSAIHLSPEGALNGAIIKIKDGDLIELDAPNNALNVLEKDFEKRGINPLFLETLENLEKPTFGLGRELFTSLRLNANTAEEGGMSFGIKV.

Positions 154 and 221 each coordinate [4Fe-4S] cluster.

This sequence belongs to the IlvD/Edd family. It depends on [4Fe-4S] cluster as a cofactor.

The catalysed reaction is 6-phospho-D-gluconate = 2-dehydro-3-deoxy-6-phospho-D-gluconate + H2O. Its pathway is carbohydrate metabolism; Entner-Doudoroff pathway. Catalyzes the dehydration of 6-phospho-D-gluconate to 2-dehydro-3-deoxy-6-phospho-D-gluconate. The chain is Phosphogluconate dehydratase from Helicobacter pylori (strain J99 / ATCC 700824) (Campylobacter pylori J99).